Reading from the N-terminus, the 73-residue chain is Kappa-scoloptoxin(03)-Ssm1c (73 aa).

Positions Met1–Ser23 are cleaved as a signal peptide. Cystine bridges form between Cys32/Cys58, Cys41/Cys57, and Cys44/Cys67.

This sequence belongs to the scoloptoxin family. As to expression, expressed by the venom gland.

Its subcellular location is the secreted. Functionally, inhibits voltage-gated potassium channels. The polypeptide is Kappa-scoloptoxin(03)-Ssm1c (Scolopendra mutilans (Chinese red-headed centipede)).